The chain runs to 347 residues: 4-hydroxy-2-oxovalerate aldolase 4 (347 aa).

The 251-residue stretch at 9–259 (ITIVDTTLRD…DTGVDLFPLI (251 aa)) folds into the Pyruvate carboxyltransferase domain. Substrate-binding positions include 17 to 18 (RD), Ser-171, and His-198. Residue Asp-18 coordinates Mn(2+). Mn(2+)-binding residues include His-198 and His-200. A substrate-binding site is contributed by Tyr-289.

This sequence belongs to the 4-hydroxy-2-oxovalerate aldolase family.

The enzyme catalyses (S)-4-hydroxy-2-oxopentanoate = acetaldehyde + pyruvate. This is 4-hydroxy-2-oxovalerate aldolase 4 from Rhodococcus opacus (strain B4).